Reading from the N-terminus, the 144-residue chain is Large ribosomal subunit protein uL15 (144 aa).

Residues Met-1–Glu-51 form a disordered region. The span at Arg-21–His-35 shows a compositional bias: gly residues.

The protein belongs to the universal ribosomal protein uL15 family. In terms of assembly, part of the 50S ribosomal subunit.

Its function is as follows. Binds to the 23S rRNA. The sequence is that of Large ribosomal subunit protein uL15 from Vesicomyosocius okutanii subsp. Calyptogena okutanii (strain HA).